The chain runs to 509 residues: Heat shock 70 kDa protein 14 (509 aa).

The protein belongs to the heat shock protein 70 family. In terms of assembly, component of ribosome-associated complex (RAC), a heterodimer composed of Hsp70/DnaK-type chaperone HSPA14 and Hsp40/DnaJ-type chaperone DNAJC2.

It is found in the cytoplasm. It localises to the cytosol. Component of the ribosome-associated complex (RAC), a complex involved in folding or maintaining nascent polypeptides in a folding-competent state. In the RAC complex, binds to the nascent polypeptide chain, while DNAJC2 stimulates its ATPase activity. This is Heat shock 70 kDa protein 14 (HSPA14) from Pongo abelii (Sumatran orangutan).